The following is a 92-amino-acid chain: Small ribosomal subunit protein uS19 (92 aa).

It belongs to the universal ribosomal protein uS19 family.

Its function is as follows. Protein S19 forms a complex with S13 that binds strongly to the 16S ribosomal RNA. The polypeptide is Small ribosomal subunit protein uS19 (Phenylobacterium zucineum (strain HLK1)).